Consider the following 389-residue polypeptide: MALQPSPLRVAMVAGEPSGDLLAASLLDGLASRLPAGTQYYGIGGPRMIATGFDAHFPMEKLTVRGYVEALKHIPEILGIRTELKRQLLAEPPSVFVGVDAPDFNFGLEHPLRDAGIPTVHFVCPSIWAWRGGRIKKIAKAVDHMLCVFPFETALLEKAGVAASYVGHPLADEIPLVPDTLGARRALGLAEEGPIIAVLPGSRRSEIDLIGPTFFAAIEMMQHQEPALRFVMPAATPALREMLRPLVDSHPGLALTITDGQSQLAMTAADAILVKSGTVTLEAALLKKPMVISYKVPWLTGQIMRRQGYLPYVGLPNILAGRFVVPEILQHFATPQALAEATLKQLRDENNRRTLTEIFTEMHHVLKQNTAQRAAEVVASVIEKRKARP.

Belongs to the LpxB family.

The enzyme catalyses a lipid X + a UDP-2-N,3-O-bis[(3R)-3-hydroxyacyl]-alpha-D-glucosamine = a lipid A disaccharide + UDP + H(+). The protein operates within bacterial outer membrane biogenesis; LPS lipid A biosynthesis. In terms of biological role, condensation of UDP-2,3-diacylglucosamine and 2,3-diacylglucosamine-1-phosphate to form lipid A disaccharide, a precursor of lipid A, a phosphorylated glycolipid that anchors the lipopolysaccharide to the outer membrane of the cell. The protein is Lipid-A-disaccharide synthase of Paraburkholderia xenovorans (strain LB400).